A 259-amino-acid chain; its full sequence is Protein SODIUM POTASSIUM ROOT DEFECTIVE 2 (259 aa).

A disordered region spans residues 141 to 165; sequence PDSITGSVDQDPAKTVEAEAPAGED. A compositionally biased stretch (basic and acidic residues) spans 151–165; that stretch reads DPAKTVEAEAPAGED. The region spanning 180 to 246 is the HMA domain; the sequence is QQVVVLKVSL…KVKNAQFWTN (67 aa). Residues Cys-191 and Cys-194 each contribute to the a metal cation site.

This chain is Protein SODIUM POTASSIUM ROOT DEFECTIVE 2, found in Arabidopsis thaliana (Mouse-ear cress).